The chain runs to 517 residues: Benzoate 4-monooxygenase bphA (517 aa).

Residues 4–24 (LLLSPYGAYLGLALLVLYYLL) form a helical membrane-spanning segment. Residues Asn-282 and Asn-325 are each glycosylated (N-linked (GlcNAc...) asparagine). Heme is bound at residue Cys-461.

This sequence belongs to the cytochrome P450 family. Requires heme as cofactor.

The protein localises to the membrane. It catalyses the reaction benzoate + reduced [NADPH--hemoprotein reductase] + O2 = 4-hydroxybenzoate + oxidized [NADPH--hemoprotein reductase] + H2O + H(+). Cytochrome P450 monooxygenase; part of the benzoic acid degradation pathway also known as the protocatechuic acid pathway. Benzoic acid debradation begins with the conversion of benzoic acid into 4-hydroxybenzoic acid through hydroxylation by the benzoate-4-monooxygenase bphA, and its partner NADPH-cytochrome P450 reductase cprA which act as a mediator in electron donation from NADPH. 4-Hydroxybenzoic acid is then converted into 3,4-dihydroxybenzoic acid (also called protocatechuic acid) by the p-hydroxybenzoate-m-hydroxylase phhA. Protocatechuic acid is converted into 3-carboxy-cis,cis-muconic acid by the intradiol ring-cleavage dioxygenase prcA, which is further metabolized through the 3-oxoadipate pathway to finally enter the tricarboxylic acid cycle (TCA). This chain is Benzoate 4-monooxygenase bphA, found in Aspergillus niger (strain ATCC MYA-4892 / CBS 513.88 / FGSC A1513).